Consider the following 206-residue polypeptide: Ras-related protein RABG3f (206 aa).

Position 15-23 (15-23 (GDSGVGKTS)) interacts with GTP. An Effector region motif is present at residues 37–45 (YKATIGADF). Residues 63-67 (DTAGQ), 125-128 (NKVD), and 158-159 (SA) each bind GTP. Residues Cys204 and Cys206 are each lipidated (S-geranylgeranyl cysteine). Cys206 carries the cysteine methyl ester modification.

This sequence belongs to the small GTPase superfamily. Rab family. As to quaternary structure, interacts with VPS35A.

The protein resides in the endosome membrane. Its subcellular location is the vacuole membrane. It localises to the prevacuolar compartment membrane. With respect to regulation, regulated by guanine nucleotide exchange factors (GEFs) which promote the exchange of bound GDP for free GTP. Regulated by the MON1-CCZ1 complex which serves as a link between Rab5 and Rab7 protein families in PVCs and mediates PVC maturation. Its function is as follows. Essential for trafficking from prevacuolar compartments to vacuoles. Involved in the trafficking of newly synthesized protein to vacuoles. Essential for plant growth. Participates in the recruitment of the core retromer components to the endosomal membrane by interacting with VPS35A. The sequence is that of Ras-related protein RABG3f (RABG3F) from Arabidopsis thaliana (Mouse-ear cress).